A 382-amino-acid polypeptide reads, in one-letter code: ATP phosphoribosyltransferase regulatory subunit (382 aa).

Belongs to the class-II aminoacyl-tRNA synthetase family. HisZ subfamily. Heteromultimer composed of HisG and HisZ subunits.

The protein resides in the cytoplasm. The protein operates within amino-acid biosynthesis; L-histidine biosynthesis; L-histidine from 5-phospho-alpha-D-ribose 1-diphosphate: step 1/9. Its function is as follows. Required for the first step of histidine biosynthesis. May allow the feedback regulation of ATP phosphoribosyltransferase activity by histidine. This is ATP phosphoribosyltransferase regulatory subunit from Burkholderia vietnamiensis (strain G4 / LMG 22486) (Burkholderia cepacia (strain R1808)).